Here is a 195-residue protein sequence, read N- to C-terminus: Cytochrome c oxidase subunit 1 (195 aa).

A helical membrane pass occupies residues 12–32 (MYWVLGFIFLFTLGGLTGIVL). 2 residues coordinate Mg(2+): histidine 42 and aspartate 43. A heme a3-binding site is contributed by histidine 50. Histidine 52 is a Fe(II)-heme a binding site. 3 helical membrane passes run 59-79 (AVFA…GLVL), 88-108 (FIVM…LGLA), and 131-151 (GSLM…EAFL).

Belongs to the heme-copper respiratory oxidase family. As to quaternary structure, component of the cytochrome c oxidase (complex IV, CIV), a multisubunit enzyme composed of a catalytic core of 3 subunits and several supernumerary subunits. The complex exists as a monomer or a dimer and forms supercomplexes (SCs) in the inner mitochondrial membrane with ubiquinol-cytochrome c oxidoreductase (cytochrome b-c1 complex, complex III, CIII). Heme serves as cofactor. Cu cation is required as a cofactor.

It localises to the mitochondrion inner membrane. It carries out the reaction 4 Fe(II)-[cytochrome c] + O2 + 8 H(+)(in) = 4 Fe(III)-[cytochrome c] + 2 H2O + 4 H(+)(out). It functions in the pathway energy metabolism; oxidative phosphorylation. Functionally, component of the cytochrome c oxidase, the last enzyme in the mitochondrial electron transport chain which drives oxidative phosphorylation. The respiratory chain contains 3 multisubunit complexes succinate dehydrogenase (complex II, CII), ubiquinol-cytochrome c oxidoreductase (cytochrome b-c1 complex, complex III, CIII) and cytochrome c oxidase (complex IV, CIV), that cooperate to transfer electrons derived from NADH and succinate to molecular oxygen, creating an electrochemical gradient over the inner membrane that drives transmembrane transport and the ATP synthase. Cytochrome c oxidase is the component of the respiratory chain that catalyzes the reduction of oxygen to water. Electrons originating from reduced cytochrome c in the intermembrane space (IMS) are transferred via the dinuclear copper A center (CU(A)) of subunit 2 and heme A of subunit 1 to the active site in subunit 1, a binuclear center (BNC) formed by heme A3 and copper B (CU(B)). The BNC reduces molecular oxygen to 2 water molecules using 4 electrons from cytochrome c in the IMS and 4 protons from the mitochondrial matrix. This chain is Cytochrome c oxidase subunit 1 (COI), found in Albinaria turrita (Door snail).